The sequence spans 162 residues: NADH-quinone oxidoreductase subunit I (162 aa).

4Fe-4S ferredoxin-type domains lie at 53–83 (LRRY…IEAE) and 93–122 (TRYD…EGPN). Positions 63, 66, 69, 73, 102, 105, 108, and 112 each coordinate [4Fe-4S] cluster.

This sequence belongs to the complex I 23 kDa subunit family. As to quaternary structure, NDH-1 is composed of 14 different subunits. Subunits NuoA, H, J, K, L, M, N constitute the membrane sector of the complex. The cofactor is [4Fe-4S] cluster.

It localises to the cell inner membrane. The enzyme catalyses a quinone + NADH + 5 H(+)(in) = a quinol + NAD(+) + 4 H(+)(out). Its function is as follows. NDH-1 shuttles electrons from NADH, via FMN and iron-sulfur (Fe-S) centers, to quinones in the respiratory chain. The immediate electron acceptor for the enzyme in this species is believed to be ubiquinone. Couples the redox reaction to proton translocation (for every two electrons transferred, four hydrogen ions are translocated across the cytoplasmic membrane), and thus conserves the redox energy in a proton gradient. This is NADH-quinone oxidoreductase subunit I from Maricaulis maris (strain MCS10) (Caulobacter maris).